Here is a 90-residue protein sequence, read N- to C-terminus: Large ribosomal subunit protein uL16c (90 aa).

Belongs to the universal ribosomal protein uL16 family. As to quaternary structure, part of the 50S ribosomal subunit.

The protein resides in the plastid. Its subcellular location is the chloroplast. The chain is Large ribosomal subunit protein uL16c (rpl16) from Oenothera ammophila (Evening primerose).